We begin with the raw amino-acid sequence, 78 residues long: Myrmicitoxin-Ta2a (78 aa).

The N-terminal stretch at 1–26 is a signal peptide; sequence MKLSFLSLALAIIFVTVLIYAPQAEA. Residues 27-56 constitute a propeptide that is removed on maturation; that stretch reads KALADAVADADADADAAADAVADALADADA. K77 carries the post-translational modification Lysine amide.

This sequence belongs to the formicidae venom precursor-01 superfamily. As to expression, expressed by the venom gland.

The protein localises to the secreted. In terms of biological role, peptide with toxicity towards insects that may also act as antimicrobial peptide. Causes calcium influx in F11 cells (EC(50)=5.8 nM), possibly by modulating sodium channels (Nav). In vivo, is lethal to insects, but does not show toxicity to vertebrates. Intraplantar injection into mice does not induce spontaneous nocifensive behaviors up to a dose of 200 pmol. This chain is Myrmicitoxin-Ta2a, found in Tetramorium africanum (Fierce ant).